The following is a 182-amino-acid chain: Large ribosomal subunit protein uL6 (182 aa).

This sequence belongs to the universal ribosomal protein uL6 family. In terms of assembly, part of the 50S ribosomal subunit.

This protein binds to the 23S rRNA, and is important in its secondary structure. It is located near the subunit interface in the base of the L7/L12 stalk, and near the tRNA binding site of the peptidyltransferase center. This is Large ribosomal subunit protein uL6 from Dehalococcoides mccartyi (strain ATCC BAA-2100 / JCM 16839 / KCTC 5957 / BAV1).